The chain runs to 626 residues: Chaperone protein HtpG (626 aa).

Residues 1 to 339 (MSTNQETRGF…SNDLPLNVSR (339 aa)) are a; substrate-binding. The interval 340–555 (EILQDNKVTA…NDQMTTQMAK (216 aa)) is b. The c stretch occupies residues 556-626 (LFAAAGQPVP…FIKRVNSLLS (71 aa)).

It belongs to the heat shock protein 90 family. In terms of assembly, homodimer.

It localises to the cytoplasm. In terms of biological role, molecular chaperone. Has ATPase activity. The polypeptide is Chaperone protein HtpG (Histophilus somni (strain 129Pt) (Haemophilus somnus)).